Here is a 219-residue protein sequence, read N- to C-terminus: Large ribosomal subunit protein uL4 (219 aa).

The interval 43-100 (AAKRQGTHSTKTRGEVSGGGKKPYRQKGTGRARQGSTRAPQFTGGGTVHGPQPRDYSQ) is disordered.

It belongs to the universal ribosomal protein uL4 family. As to quaternary structure, part of the 50S ribosomal subunit.

In terms of biological role, one of the primary rRNA binding proteins, this protein initially binds near the 5'-end of the 23S rRNA. It is important during the early stages of 50S assembly. It makes multiple contacts with different domains of the 23S rRNA in the assembled 50S subunit and ribosome. Forms part of the polypeptide exit tunnel. The sequence is that of Large ribosomal subunit protein uL4 from Mycobacterium sp. (strain JLS).